A 121-amino-acid chain; its full sequence is Small ribosomal subunit protein uS13 (121 aa).

A disordered region spans residues 91-121; it reads HRKGLPVRGQRTRTNARTRKGKKKTVAGKKK.

The protein belongs to the universal ribosomal protein uS13 family. Part of the 30S ribosomal subunit. Forms a loose heterodimer with protein S19. Forms two bridges to the 50S subunit in the 70S ribosome.

Functionally, located at the top of the head of the 30S subunit, it contacts several helices of the 16S rRNA. In the 70S ribosome it contacts the 23S rRNA (bridge B1a) and protein L5 of the 50S subunit (bridge B1b), connecting the 2 subunits; these bridges are implicated in subunit movement. Contacts the tRNAs in the A and P-sites. The polypeptide is Small ribosomal subunit protein uS13 (Treponema denticola (strain ATCC 35405 / DSM 14222 / CIP 103919 / JCM 8153 / KCTC 15104)).